The following is a 393-amino-acid chain: Na(+)/H(+) antiporter NhaA (393 aa).

The next 11 membrane-spanning stretches (helical) occupy residues 24-44 (GGLV…SPLA), 58-78 (LSLL…LVGL), 96-116 (ILPG…YILF), 126-146 (GWAI…SLFG), 155-175 (IFLA…IALF), 178-198 (SDLN…LYGM), 214-234 (AVLW…GVLL), 267-287 (VAFI…FSGV), 300-320 (VAAG…FLLV), 338-358 (GVAA…LLAF), and 369-389 (MGIL…LATF).

The protein belongs to the NhaA Na(+)/H(+) (TC 2.A.33) antiporter family.

The protein localises to the cell inner membrane. The enzyme catalyses Na(+)(in) + 2 H(+)(out) = Na(+)(out) + 2 H(+)(in). Its function is as follows. Na(+)/H(+) antiporter that extrudes sodium in exchange for external protons. In Rhizobium etli (strain ATCC 51251 / DSM 11541 / JCM 21823 / NBRC 15573 / CFN 42), this protein is Na(+)/H(+) antiporter NhaA.